The sequence spans 657 residues: Pentatricopeptide repeat-containing protein CRR2, chloroplastic (657 aa).

Residues 1-51 constitute a chloroplast transit peptide; the sequence is MFLSHPPQVIQPTYHTVNFLPRSPLKPPSCSVALNNPSISSGAGAKISNNQ. 12 PPR repeats span residues 45-75, 76-110, 111-141, 142-176, 177-215, 216-246, 247-277, 284-318, 319-349, 350-384, 385-420, and 421-451; these read AKIS…ESSP, SQQT…GSDQ, DPFL…TRKR, TIYV…GVES, DRFT…GYSS, HVYI…MPVR, NVVS…MMRE, NSVT…GLDS, ILPV…MHDR, DVVS…GASP, TPVT…GIKP, and QIEH…MRTE. Positions 456-531 are type E motif; it reads VWGSLLGSCR…LPGRCWMEVR (76 aa). A type E(+) motif region spans residues 532 to 562; sequence RKMYSFVSVDEFNPLMEQIHAFLVKLAEDMK. The tract at residues 563–657 is type DYW motif; it reads EKGYIPQTKG…NGVCSCGDYW (95 aa).

Belongs to the PPR family. PCMP-H subfamily.

It is found in the plastid. Its subcellular location is the chloroplast. Functionally, required for the intergenic processing between chloroplast rsp7 and ndhB transcripts. Necessary for chloroplast NADH dehydrogenase-like (NDH) complex-dependent cyclic electron transport around PSI (CET). The polypeptide is Pentatricopeptide repeat-containing protein CRR2, chloroplastic (Arabidopsis thaliana (Mouse-ear cress)).